A 345-amino-acid chain; its full sequence is Probable deoxyhypusine synthase 2 (345 aa).

Lys292 acts as the Nucleophile in catalysis.

It belongs to the deoxyhypusine synthase family. It depends on NAD(+) as a cofactor.

The enzyme catalyses [eIF5A protein]-L-lysine + spermidine = [eIF5A protein]-deoxyhypusine + propane-1,3-diamine. Its pathway is protein modification; eIF5A hypusination. Catalyzes the NAD-dependent oxidative cleavage of spermidine and the subsequent transfer of the butylamine moiety of spermidine to the epsilon-amino group of a specific lysine residue of the eIF-5A precursor protein to form the intermediate deoxyhypusine residue. The polypeptide is Probable deoxyhypusine synthase 2 (dys2) (Methanosarcina mazei (strain ATCC BAA-159 / DSM 3647 / Goe1 / Go1 / JCM 11833 / OCM 88) (Methanosarcina frisia)).